The sequence spans 588 residues: Proteasome-associated ATPase (588 aa).

A compositionally biased stretch (basic and acidic residues) spans 1–10 (MAAHDDDMNR). Residues 1-23 (MAAHDDDMNRGIRPGRGSEDPAG) form a disordered region. Positions 47–94 (RILEERIVELQTNLAGVSAQNERLAGTLREARDQIVALKEEVDRLAQP) form a coiled coil. 276–281 (GCGKTL) provides a ligand contact to ATP. The docks into pockets in the proteasome alpha-ring stretch occupies residues 587–588 (YL).

It belongs to the AAA ATPase family. Homohexamer. Assembles into a hexameric ring structure that caps the 20S proteasome core. Strongly interacts with the prokaryotic ubiquitin-like protein Pup through a hydrophobic interface; the interacting region of ARC lies in its N-terminal coiled-coil domain. There is one Pup binding site per ARC hexamer ring. Upon ATP-binding, the C-terminus of ARC interacts with the alpha-rings of the proteasome core, possibly by binding to the intersubunit pockets.

Its pathway is protein degradation; proteasomal Pup-dependent pathway. In terms of biological role, ATPase which is responsible for recognizing, binding, unfolding and translocation of pupylated proteins into the bacterial 20S proteasome core particle. May be essential for opening the gate of the 20S proteasome via an interaction with its C-terminus, thereby allowing substrate entry and access to the site of proteolysis. Thus, the C-termini of the proteasomal ATPase may function like a 'key in a lock' to induce gate opening and therefore regulate proteolysis. The chain is Proteasome-associated ATPase from Streptomyces coelicolor (strain ATCC BAA-471 / A3(2) / M145).